A 489-amino-acid polypeptide reads, in one-letter code: Betaine aldehyde dehydrogenase (489 aa).

Thr-26 and Asp-93 together coordinate K(+). 150–152 (GAW) serves as a coordination point for NAD(+). Lys-162 serves as the catalytic Charge relay system. 176–179 (KPSE) is an NAD(+) binding site. Position 180 (Val-180) interacts with K(+). 229–232 (GVET) serves as a coordination point for NAD(+). Leu-245 contributes to the K(+) binding site. The Proton acceptor role is filled by Glu-251. Residues Gly-253, Cys-285, and Glu-386 each coordinate NAD(+). Cys-285 (nucleophile) is an active-site residue. Cys-285 carries the cysteine sulfenic acid (-SOH) modification. K(+) contacts are provided by Lys-456 and Gly-459. Glu-463 (charge relay system) is an active-site residue.

This sequence belongs to the aldehyde dehydrogenase family. Dimer of dimers. Requires K(+) as cofactor.

The enzyme catalyses betaine aldehyde + NAD(+) + H2O = glycine betaine + NADH + 2 H(+). The protein operates within amine and polyamine biosynthesis; betaine biosynthesis via choline pathway; betaine from betaine aldehyde: step 1/1. Involved in the biosynthesis of the osmoprotectant glycine betaine. Catalyzes the irreversible oxidation of betaine aldehyde to the corresponding acid. This is Betaine aldehyde dehydrogenase from Burkholderia pseudomallei (strain 1106a).